The sequence spans 632 residues: Acyl-coenzyme A oxidase-like protein (632 aa).

376–381 (TGGMGY) contacts FAD.

Belongs to the acyl-CoA oxidase family. FAD is required as a cofactor.

In Mus musculus (Mouse), this protein is Acyl-coenzyme A oxidase-like protein (Acoxl).